We begin with the raw amino-acid sequence, 237 residues long: Leucyl/phenylalanyl-tRNA--protein transferase (237 aa).

This sequence belongs to the L/F-transferase family.

It localises to the cytoplasm. The enzyme catalyses N-terminal L-lysyl-[protein] + L-leucyl-tRNA(Leu) = N-terminal L-leucyl-L-lysyl-[protein] + tRNA(Leu) + H(+). It catalyses the reaction N-terminal L-arginyl-[protein] + L-leucyl-tRNA(Leu) = N-terminal L-leucyl-L-arginyl-[protein] + tRNA(Leu) + H(+). The catalysed reaction is L-phenylalanyl-tRNA(Phe) + an N-terminal L-alpha-aminoacyl-[protein] = an N-terminal L-phenylalanyl-L-alpha-aminoacyl-[protein] + tRNA(Phe). Functionally, functions in the N-end rule pathway of protein degradation where it conjugates Leu, Phe and, less efficiently, Met from aminoacyl-tRNAs to the N-termini of proteins containing an N-terminal arginine or lysine. The polypeptide is Leucyl/phenylalanyl-tRNA--protein transferase (Shewanella baltica (strain OS155 / ATCC BAA-1091)).